The following is a 311-amino-acid chain: Methionyl-tRNA formyltransferase (311 aa).

Position 110-113 (110-113 (SLLP)) interacts with (6S)-5,6,7,8-tetrahydrofolate.

This sequence belongs to the Fmt family.

The catalysed reaction is L-methionyl-tRNA(fMet) + (6R)-10-formyltetrahydrofolate = N-formyl-L-methionyl-tRNA(fMet) + (6S)-5,6,7,8-tetrahydrofolate + H(+). In terms of biological role, attaches a formyl group to the free amino group of methionyl-tRNA(fMet). The formyl group appears to play a dual role in the initiator identity of N-formylmethionyl-tRNA by promoting its recognition by IF2 and preventing the misappropriation of this tRNA by the elongation apparatus. In Streptococcus agalactiae serotype Ia (strain ATCC 27591 / A909 / CDC SS700), this protein is Methionyl-tRNA formyltransferase.